A 617-amino-acid chain; its full sequence is Chaperone protein HscA homolog (617 aa).

This sequence belongs to the heat shock protein 70 family.

Chaperone involved in the maturation of iron-sulfur cluster-containing proteins. Has a low intrinsic ATPase activity which is markedly stimulated by HscB. This is Chaperone protein HscA homolog from Vibrio campbellii (strain ATCC BAA-1116).